We begin with the raw amino-acid sequence, 129 residues long: Small ribosomal subunit protein uS11 (129 aa).

Belongs to the universal ribosomal protein uS11 family. In terms of assembly, part of the 30S ribosomal subunit. Interacts with proteins S7 and S18. Binds to IF-3.

In terms of biological role, located on the platform of the 30S subunit, it bridges several disparate RNA helices of the 16S rRNA. Forms part of the Shine-Dalgarno cleft in the 70S ribosome. The chain is Small ribosomal subunit protein uS11 from Hyphomonas neptunium (strain ATCC 15444).